Here is a 257-residue protein sequence, read N- to C-terminus: Large ribosomal subunit protein uL3 (257 aa).

Residues Leu232–Lys257 form a disordered region.

It belongs to the universal ribosomal protein uL3 family. As to quaternary structure, part of the 50S ribosomal subunit. Forms a cluster with proteins L14 and L19.

Functionally, one of the primary rRNA binding proteins, it binds directly near the 3'-end of the 23S rRNA, where it nucleates assembly of the 50S subunit. This chain is Large ribosomal subunit protein uL3, found in Mycoplasma genitalium (strain ATCC 33530 / DSM 19775 / NCTC 10195 / G37) (Mycoplasmoides genitalium).